The following is a 523-amino-acid chain: Thiamine pathway transporter THI73 (523 aa).

Over 1–79 (MKNMSQRSMD…LSPKVLRKVD (79 aa)) the chain is Cytoplasmic. A helical transmembrane segment spans residues 80 to 100 (LFILPFLCCTYLLMFLDKALL). The Extracellular segment spans residues 101 to 118 (NYAASMGIKDHLKGNEFS). A helical transmembrane segment spans residues 119–139 (NLGTIFSAAYIFMEPVVTYLI). Over 140-141 (QK) the chain is Cytoplasmic. Residues 142 to 162 (FPISKILGTFITVWGIVLACH) form a helical membrane-spanning segment. Residues 163 to 176 (AACKTYASLMVVRT) lie on the Extracellular side of the membrane. Residues 177-197 (LLGLFESSSAVGCIAISGMYY) form a helical membrane-spanning segment. The Cytoplasmic segment spans residues 198–207 (TKSEQSARIG). The chain crosses the membrane as a helical span at residues 208–228 (FWATQAGTGYIVGGLISFGFL). The Extracellular segment spans residues 229–239 (HYHGTAFTSWQ). A helical membrane pass occupies residues 240-260 (IMFLVVGLVTVAFGVLTFLYL). Over 261-312 (PDNVTNAWFLNKEEKIQVVEHIRANQTGLETKKFKKQQVKELFLHDKFTWPM) the chain is Cytoplasmic. The chain crosses the membrane as a helical span at residues 313 to 333 (LLLTACSQISTGAIGTFSVTI). Residues 334 to 345 (TGTFGFDKYETA) are Extracellular-facing. A helical transmembrane segment spans residues 346–366 (LLQLPIGAITAMIILITTQML). Residues 367-371 (SRWGH) are Cytoplasmic-facing. Residues 372–392 (ITLITTSMYIPAIIGCIVLIS) form a helical membrane-spanning segment. The Extracellular segment spans residues 393–400 (LPLSHKIG). The helical transmembrane segment at 401–421 (NLFSLYLLYSGSCVITNIYIW) threads the bilayer. Over 422–432 (NSCNTSGYTKR) the chain is Cytoplasmic. Residues 433-452 (VFRNAITMIVYNVSCIIAPQ) traverse the membrane as a helical segment. Residues 453-466 (MFRAYSAPRYIPAK) lie on the Extracellular side of the membrane. A helical transmembrane segment spans residues 467–487 (IALLVTQCVCVPLQLYIGYIC). At 488 to 523 (KKENEKRDKEQEGQERKKYQFLDLTDIENRNFRYIY) the chain is on the cytoplasmic side.

This sequence belongs to the major facilitator superfamily. Allantoate permease family.

It localises to the endoplasmic reticulum membrane. The protein resides in the cell membrane. Its function is as follows. Transports either thiamine or, rather, a related metabolite involved in the thiamine biosynthesis pathway. In Saccharomyces cerevisiae (strain ATCC 204508 / S288c) (Baker's yeast), this protein is Thiamine pathway transporter THI73 (THI73).